The sequence spans 51 residues: Small ribosomal subunit protein eS31 (51 aa).

Residues C21, C24, C39, and C42 each contribute to the Zn(2+) site. Residues C21–C42 form a C4-type zinc finger.

The protein belongs to the eukaryotic ribosomal protein eS31 family. Part of the 30S ribosomal subunit. Requires Zn(2+) as cofactor.

The protein is Small ribosomal subunit protein eS31 of Picrophilus torridus (strain ATCC 700027 / DSM 9790 / JCM 10055 / NBRC 100828 / KAW 2/3).